The chain runs to 232 residues: Ribose-5-phosphate isomerase A (232 aa).

Residues 29 to 32, 84 to 87, and 97 to 100 each bind substrate; these read TGST, DGAD, and KGGG. Glu-106 (proton acceptor) is an active-site residue. Lys-124 is a binding site for substrate.

This sequence belongs to the ribose 5-phosphate isomerase family. In terms of assembly, homodimer.

The catalysed reaction is aldehydo-D-ribose 5-phosphate = D-ribulose 5-phosphate. It functions in the pathway carbohydrate degradation; pentose phosphate pathway; D-ribose 5-phosphate from D-ribulose 5-phosphate (non-oxidative stage): step 1/1. Its function is as follows. Catalyzes the reversible conversion of ribose-5-phosphate to ribulose 5-phosphate. The sequence is that of Ribose-5-phosphate isomerase A from Brucella suis biovar 1 (strain 1330).